The sequence spans 168 residues: Cell division inhibitor SulA (168 aa).

The tract at residues 105–111 (ALETGNY) is ftsZ binding. The segment at 161–168 (RIHSGMVH) is lon protease binding.

Belongs to the SulA family. Interacts with FtsZ. Post-translationally, is rapidly cleaved and degraded by the Lon protease once DNA damage is repaired.

Functionally, component of the SOS system and an inhibitor of cell division. Accumulation of SulA causes rapid cessation of cell division and the appearance of long, non-septate filaments. In the presence of GTP, binds a polymerization-competent form of FtsZ in a 1:1 ratio, thus inhibiting FtsZ polymerization and therefore preventing it from participating in the assembly of the Z ring. This mechanism prevents the premature segregation of damaged DNA to daughter cells during cell division. The polypeptide is Cell division inhibitor SulA (Cronobacter sakazakii (strain ATCC BAA-894) (Enterobacter sakazakii)).